The chain runs to 123 residues: Large ribosomal subunit protein bL12 (123 aa).

The protein belongs to the bacterial ribosomal protein bL12 family. As to quaternary structure, homodimer. Part of the ribosomal stalk of the 50S ribosomal subunit. Forms a multimeric L10(L12)X complex, where L10 forms an elongated spine to which 2 to 4 L12 dimers bind in a sequential fashion. Binds GTP-bound translation factors.

Functionally, forms part of the ribosomal stalk which helps the ribosome interact with GTP-bound translation factors. Is thus essential for accurate translation. This is Large ribosomal subunit protein bL12 from Ectopseudomonas mendocina (strain ymp) (Pseudomonas mendocina).